A 184-amino-acid polypeptide reads, in one-letter code: ATP synthase subunit b, chloroplastic (184 aa).

Residues 27–49 (LATNPINLSVVFGVLIFFGKGVL) traverse the membrane as a helical segment.

This sequence belongs to the ATPase B chain family. In terms of assembly, F-type ATPases have 2 components, F(1) - the catalytic core - and F(0) - the membrane proton channel. F(1) has five subunits: alpha(3), beta(3), gamma(1), delta(1), epsilon(1). F(0) has four main subunits: a(1), b(1), b'(1) and c(10-14). The alpha and beta chains form an alternating ring which encloses part of the gamma chain. F(1) is attached to F(0) by a central stalk formed by the gamma and epsilon chains, while a peripheral stalk is formed by the delta, b and b' chains.

It is found in the plastid. It localises to the chloroplast thylakoid membrane. Its function is as follows. F(1)F(0) ATP synthase produces ATP from ADP in the presence of a proton or sodium gradient. F-type ATPases consist of two structural domains, F(1) containing the extramembraneous catalytic core and F(0) containing the membrane proton channel, linked together by a central stalk and a peripheral stalk. During catalysis, ATP synthesis in the catalytic domain of F(1) is coupled via a rotary mechanism of the central stalk subunits to proton translocation. In terms of biological role, component of the F(0) channel, it forms part of the peripheral stalk, linking F(1) to F(0). The sequence is that of ATP synthase subunit b, chloroplastic from Crucihimalaya wallichii (Rock-cress).